We begin with the raw amino-acid sequence, 187 residues long: Elongation factor P (187 aa).

Belongs to the elongation factor P family.

It is found in the cytoplasm. Its pathway is protein biosynthesis; polypeptide chain elongation. Functionally, involved in peptide bond synthesis. Stimulates efficient translation and peptide-bond synthesis on native or reconstituted 70S ribosomes in vitro. Probably functions indirectly by altering the affinity of the ribosome for aminoacyl-tRNA, thus increasing their reactivity as acceptors for peptidyl transferase. This is Elongation factor P from Roseobacter denitrificans (strain ATCC 33942 / OCh 114) (Erythrobacter sp. (strain OCh 114)).